A 109-amino-acid polypeptide reads, in one-letter code: GPKEPEVTVPEGDASAGRDIFDSQCSACHAIEGDSTAAPVLGGVIGRKAGQEKFAYSKGMKGSGITWNEKHLFVFLKNPSKHVPGTKMAFAGLPADKDRADLIAYLKSV.

Heme c contacts are provided by cysteine 25, cysteine 28, histidine 29, and methionine 88.

Belongs to the cytochrome c family. Binds 1 heme c group covalently per subunit.

The protein localises to the mitochondrion intermembrane space. Electron carrier protein. The oxidized form of the cytochrome c heme group can accept an electron from the heme group of the cytochrome c1 subunit of cytochrome reductase. Cytochrome c then transfers this electron to the cytochrome oxidase complex, the final protein carrier in the mitochondrial electron-transport chain. The chain is Cytochrome c from Tetrahymena pyriformis.